We begin with the raw amino-acid sequence, 209 residues long: uncharacterized protein (209 aa).

The MPN domain maps to 1–67 (MEILPKYKPE…LIMYNYWTID (67 aa)). 3 residues coordinate Zn(2+): His17, His19, and Asp30. The JAMM motif signature appears at 17–30 (HTHPKGPAEPSIND).

This is an uncharacterized protein from Acidianus convivator (ATV).